We begin with the raw amino-acid sequence, 205 residues long: Ras-like protein 3 (205 aa).

16-23 (GGGGVGKS) contacts GTP. The Effector region motif lies at 38-46 (YDPTIEDSY). GTP-binding positions include 63-67 (DTAGQ) and 122-125 (NKCD). Cysteine methyl ester is present on cysteine 202. Cysteine 202 is lipidated: S-farnesyl cysteine. The propeptide at 203–205 (ILM) is removed in mature form.

Belongs to the small GTPase superfamily. Ras family.

It localises to the cell membrane. It carries out the reaction GTP + H2O = GDP + phosphate + H(+). Its activity is regulated as follows. Alternates between an inactive form bound to GDP and an active form bound to GTP. Activated by a guanine nucleotide-exchange factor (GEF) and inactivated by a GTPase-activating protein (GAP). The chain is Ras-like protein 3 (RAS3) from Mucor circinelloides f. lusitanicus (Mucor racemosus var. lusitanicus).